A 1452-amino-acid polypeptide reads, in one-letter code: Pleiotropic drug resistance protein 1 (1452 aa).

Positions 152–425 (LNYLHILPNR…FEYMGFICPE (274 aa)) constitute an ABC transporter 1 domain. An ATP-binding site is contributed by 185–192 (GPPSSGKT). The ABC transmembrane type-2 1 domain maps to 504–716 (LLKACTAREY…AQNAIAVNEF (213 aa)). 7 consecutive transmembrane segments (helical) span residues 521 to 541 (FVYIFKMIQLTLMASITMTLF), 554 to 574 (GAVFLGALFYALIMIMFNGFS), 609 to 629 (IPITLVEVAIWVCMTYYVIGF), 640 to 660 (LLLLICVNQMASGLFRLMGAL), 664 to 684 (IIVANTFGSFVLLTVLVMGGF), 694 to 714 (WWIWGYWISPMMYAQNAIAVN), and 753 to 773 (IGAGALIGYVFLFNFLFAVAL). A disordered region spans residues 808–830 (LGKSSSEKGNDVRRSASSRSMSS). A compositionally biased stretch (basic and acidic residues) spans 812-821 (SSEKGNDVRR). Residues 855–1107 (ITFDDIRYAV…HLIKYFEGID (253 aa)) enclose the ABC transporter 2 domain. 900 to 907 (GVSGAGKT) serves as a coordination point for ATP. An ABC transmembrane type-2 2 domain is found at 1180 to 1394 (TQCMACFWKQ…TLYGLIASQF (215 aa)). Helical transmembrane passes span 1199 to 1219 (YTAVRIMFTFFIALMFGTIFW), 1239 to 1259 (YIAVLFLGVQNATTVQPVIAI), 1287 to 1307 (LPYLFLQTIIYGVIVYAMIGF), 1314 to 1334 (FFWYLFFMYFTLLYFTLYGMM), 1344 to 1364 (IAAIISSAFYAVWNLFCGFIV), 1375 to 1395 (WYYYICPISWTLYGLIASQFG), and 1421 to 1441 (FVGYVALILVGISVLFLFIFA).

The protein belongs to the ABC transporter superfamily. ABCG family. PDR (TC 3.A.1.205) subfamily. As to expression, expressed in root hypodermal passage cells. Expressed in stem tissues, particularly the vasculature and nodes adjacent to leaf axils.

It is found in the cell membrane. Its function is as follows. Cellular strigolactone (SL) transporter required for the exudation of SL from the root to the soil. The presence of SL in the vicinity of the roots is required for development of symbiotic interactions with arbuscular mycorrhizal fungi (AMF). Transports SL in the above ground tissues and is required for the control of shoot branching. SL regulates plant shoot architecture by inhibiting the outgrowth of axillary buds. Involved in the regulation of shootward and outward directional strigolactone transport in roots. Due to its polar localization in root cells, mediates directional shootward strigolactone transport, as well as localized outward directional transport for exudation to the soil. The chain is Pleiotropic drug resistance protein 1 from Petunia hybrida (Petunia).